Reading from the N-terminus, the 156-residue chain is Endoribonuclease YbeY (156 aa).

Positions 105, 109, and 115 each coordinate Zn(2+).

This sequence belongs to the endoribonuclease YbeY family. Zn(2+) is required as a cofactor.

It is found in the cytoplasm. Single strand-specific metallo-endoribonuclease involved in late-stage 70S ribosome quality control and in maturation of the 3' terminus of the 16S rRNA. This chain is Endoribonuclease YbeY, found in Chlorobium chlorochromatii (strain CaD3).